We begin with the raw amino-acid sequence, 918 residues long: E3 ubiquitin-protein ligase CBL-B-A (918 aa).

The segment covering 1-18 (MASGSGSSSSTSSSALSG) has biased composition (low complexity). The tract at residues 1–27 (MASGSGSSSSTSSSALSGRLPGSRSAN) is disordered. Positions 46 to 178 (PPKQAAADRR…KAIFPSGQFQ (133 aa)) are 4H. One can recognise a Cbl-PTB domain in the interval 46–354 (PPKQAAADRR…GRSYNPDLTG (309 aa)). An EF-hand-like region spans residues 179–251 (GDNFRITKAD…FEFDIFTRLF (73 aa)). Ca(2+) contacts are provided by aspartate 232, threonine 234, asparagine 236, tyrosine 238, and glutamate 243. The tract at residues 252-354 (QPWGSILRNW…GRSYNPDLTG (103 aa)) is SH2-like. Residue arginine 297 participates in 4-O-phospho-L-tyrosine binding. The linker stretch occupies residues 355–383 (LCEPTPHDHIKVTQEQYELYCEMGSTFQL). An RING-type zinc finger spans residues 384–423 (CKICAENDKDVKIEPCGHLMCTSCLTSWQESDGQGCPFCR). Disordered regions lie at residues 481 to 582 (NERQ…RTCR), 780 to 831 (FPPA…PPAR), and 857 to 918 (HSDP…MRPT). Residues 483–497 (RQNSPVTSPGSSPLS) show a composition bias toward polar residues. Pro residues-rich tracts occupy residues 554–576 (LPAP…PIPP) and 821–830 (PSQPPPPPPA). Over residues 898 to 918 (KASNTKGELLLPNQNLIMRPT) the composition is skewed to polar residues.

In terms of assembly, interacts with several SH3 domain-containing proteins and with poly-ubiquitinated proteins.

It localises to the cytoplasm. It catalyses the reaction S-ubiquitinyl-[E2 ubiquitin-conjugating enzyme]-L-cysteine + [acceptor protein]-L-lysine = [E2 ubiquitin-conjugating enzyme]-L-cysteine + N(6)-ubiquitinyl-[acceptor protein]-L-lysine.. The protein operates within protein modification; protein ubiquitination. Its function is as follows. E3 ubiquitin-protein ligase which accepts ubiquitin from specific E2 ubiquitin-conjugating enzymes, and transfers it to substrates, generally promoting their degradation by the proteasome. The sequence is that of E3 ubiquitin-protein ligase CBL-B-A (cblb-a) from Xenopus laevis (African clawed frog).